We begin with the raw amino-acid sequence, 80 residues long: Exodeoxyribonuclease 7 small subunit (80 aa).

Belongs to the XseB family. Heterooligomer composed of large and small subunits.

It localises to the cytoplasm. It catalyses the reaction Exonucleolytic cleavage in either 5'- to 3'- or 3'- to 5'-direction to yield nucleoside 5'-phosphates.. In terms of biological role, bidirectionally degrades single-stranded DNA into large acid-insoluble oligonucleotides, which are then degraded further into small acid-soluble oligonucleotides. In Escherichia coli O139:H28 (strain E24377A / ETEC), this protein is Exodeoxyribonuclease 7 small subunit.